The chain runs to 347 residues: NADH-ubiquinone oxidoreductase chain 2 (347 aa).

9 helical membrane-spanning segments follow: residues 3-23 (PPIL…VLMS), 25-45 (HWLM…PILM), 67-87 (SMLL…WAVL), 150-170 (NPHL…WGGL), 178-198 (ILAY…TYSP), 201-221 (MLLN…LFMF), 237-257 (LPLI…LPPL), 274-294 (NMII…YFYM), and 323-343 (MTML…TPMM).

Belongs to the complex I subunit 2 family. As to quaternary structure, core subunit of respiratory chain NADH dehydrogenase (Complex I) which is composed of 45 different subunits. Interacts with TMEM242.

It is found in the mitochondrion inner membrane. The enzyme catalyses a ubiquinone + NADH + 5 H(+)(in) = a ubiquinol + NAD(+) + 4 H(+)(out). Core subunit of the mitochondrial membrane respiratory chain NADH dehydrogenase (Complex I) which catalyzes electron transfer from NADH through the respiratory chain, using ubiquinone as an electron acceptor. Essential for the catalytic activity and assembly of complex I. The protein is NADH-ubiquinone oxidoreductase chain 2 of Mustela kathiah (Yellow-bellied weasel).